Consider the following 103-residue polypeptide: N(4)-acetylcytidine amidohydrolase (103 aa).

Residues 6–101 (ITFSQRFQDD…QTQFYVIEFK (96 aa)) form the ASCH domain. Lys-21 (proton acceptor) is an active-site residue. Thr-24 serves as the catalytic Nucleophile. The active-site Proton donor is Glu-74.

The protein belongs to the N(4)-acetylcytidine amidohydrolase family.

The enzyme catalyses N(4)-acetylcytidine + H2O = cytidine + acetate + H(+). The catalysed reaction is N(4)-acetyl-2'-deoxycytidine + H2O = 2'-deoxycytidine + acetate + H(+). It carries out the reaction N(4)-acetylcytosine + H2O = cytosine + acetate + H(+). Functionally, catalyzes the hydrolysis of N(4)-acetylcytidine (ac4C). This chain is N(4)-acetylcytidine amidohydrolase (yqfB), found in Shigella boydii serotype 4 (strain Sb227).